The chain runs to 615 residues: MIGLLFVFSVLLSFSVGYIFPFSTSNGPTVNDTLQHAIRSQRDVSKPIPIDRVEFSGVSLSSFFESEGYSSDSLSNLYGLLKENIAGVMIDLYWNEFTSKWQLCPAPFPNNITYTSSNRVVDVSWNNRTYKCDPNLSTDDIMSILNNFIRDTNTDVEANFMHVMYNLKSIHYKKSNQTINLENAYKEKNSNFNVGMDTLNDTVSLLSSYIFTPLLLEQYQSSSSKNANSSSSIRYIDSLNETQAIQKFYNQSTILMPSLQTTLLTQYKRLMVHVISNDMAESSRSYQISFSDKETIFFNNVFPAMIGHTNNASADDFCYELTHAYNGTDVNIMEFNRVSLNSTLRLIIDNDKTPFTTDSLSKYVRCGYCPVFNSTQYSSQKVTEGNSSIISQEFTSNLFWSWAPGQPSGPDNCTNCTRPVTNYTSKYSEASNGGSDEEEHSNNIAYKCVALTENGWEVSNCYEKYLFACQNKLSRNEWKLDNYTKRNYFDLDDDDCPEGYFFSLPRSNIEMLSLMTTVKQENVSYPIWIDLNDITVENCFVSGGPYAQCPYQETVTTDKFVRMIAPSFVVAMVVLVLIFLEKVFRKTPIQTNRKRYWKKAIQEYYAKNDYEGVPS.

The first 17 residues, 1-17, serve as a signal peptide directing secretion; sequence MIGLLFVFSVLLSFSVG. The Extracellular portion of the chain corresponds to 18–559; that stretch reads YIFPFSTSNG…PYQETVTTDK (542 aa). N-linked (GlcNAc...) asparagine glycans are attached at residues Asn31, Asn111, Asn127, Asn135, Asn176, Asn200, Asn228, Asn240, Asn250, Asn311, Asn326, Asn341, Asn373, Asn386, Asn412, Asn415, Asn422, Asn482, and Asn522. A helical membrane pass occupies residues 560-580; the sequence is FVRMIAPSFVVAMVVLVLIFL. Residues 581–615 lie on the Cytoplasmic side of the membrane; the sequence is EKVFRKTPIQTNRKRYWKKAIQEYYAKNDYEGVPS.

It belongs to the MTC6 family.

The protein resides in the membrane. In terms of biological role, may be involved in telomere capping. The chain is Maintenance of telomere capping protein 6 (MTC6) from Candida dubliniensis (strain CD36 / ATCC MYA-646 / CBS 7987 / NCPF 3949 / NRRL Y-17841) (Yeast).